The primary structure comprises 233 residues: Cilia- and flagella-associated protein 299 (233 aa).

In terms of tissue distribution, abundantly expressed in testis, specifically in spermatogonia and primary spermatocytes but not in secondary spermatocytes and spermatids.

The protein localises to the cytoplasm. Its subcellular location is the nucleus. Functionally, may be involved in spermatogenesis. This chain is Cilia- and flagella-associated protein 299, found in Mus musculus (Mouse).